Here is a 344-residue protein sequence, read N- to C-terminus: Molybdate/tungstate import ATP-binding protein WtpC (344 aa).

Residues 2–231 (LRVESVSKDY…PVDEGVARFL (230 aa)) enclose the ABC transporter domain. Position 33 to 40 (33 to 40 (GPSGAGKT)) interacts with ATP. The 65-residue stretch at 280-344 (KTSARNEFRA…SFKTSAIKVF (65 aa)) folds into the Mop domain.

This sequence belongs to the ABC transporter superfamily. Sulfate/tungstate importer (TC 3.A.1.6) family. The complex is composed of two ATP-binding proteins (WtpC), two transmembrane proteins (WtpB) and a solute-binding protein (WtpA).

Its subcellular location is the cell membrane. It carries out the reaction tungstate(in) + ATP + H2O = tungstate(out) + ADP + phosphate + H(+). In terms of biological role, part of the ABC transporter complex WtpABC involved in molybdate/tungstate import. Responsible for energy coupling to the transport system. The chain is Molybdate/tungstate import ATP-binding protein WtpC (wtpC) from Pyrococcus abyssi (strain GE5 / Orsay).